A 577-amino-acid polypeptide reads, in one-letter code: MDRAVSQVALENDEREAKNTWRLIFRIAILLLTVVTLATSVASLVYSMGASTPSDLVGIPTRISRAEEKITSALGSNQDVVDRIYKQVALESPLALLNTETTIMNAITSLSYQINGAANNSGWGAPIHDPDFIGGIGKELIVDDASDVTSFYPSAFQEHLNFIPAPTTGSGCTRIPSFDMSATHYCYTHNVILSGCRDHSHSHQYLALGVLRTTATGRIFFSTLRSISLDDTQNRKSCSVSATPLGCDMLCSKVTETEEEDYNSAVPTLMAHGRLGFDGQYHEKDLDVTTLFEDWVANYPGVGGGSFIDGRVWFSVYGGLKPNSPSDTVQEGKYVIYKRYNDTCPDEQDYQIRMAKSSYKPGRFGGKRIQQAILSIKVSTSLGEDPVLTVPPNTVTLMGAEGRILTVGTSHFLYQRGSSYFSPALLYPMTVSNKTATLHSPYTFNAFTRPGSIPCQASARCPNSCVTGVYTDPYPLIFYRNHTLRGVFGTMLDSEQARLNPTSAVFDSTSRSRITRVSSSSTKAAYTTSTCFKVVKTNKTYCLSIAEISNTLFGEFRIVPLLVEILKNDGVREARSG.

The residue at position 1 (Met1) is a Blocked amino end (Met); by host. The Intravirion portion of the chain corresponds to 1–26 (MDRAVSQVALENDEREAKNTWRLIFR). Residues 27 to 48 (IAILLLTVVTLATSVASLVYSM) traverse the membrane as a helical segment. Residues 49-577 (GASTPSDLVG…NDGVREARSG (529 aa)) are Virion surface-facing. N-linked (GlcNAc...) asparagine; by host glycosylation is present at Asn119. Positions 124 to 152 (GAPIHDPDFIGGIGKELIVDDASDVTSFY) are important for interaction with fusion/F protein. Cystine bridges form between Cys172–Cys196, Cys186–Cys247, and Cys238–Cys251. Residues 234–239 (NRKSCS) form an involved in neuraminidase activity region. N-linked (GlcNAc...) asparagine; by host glycosylation is found at Asn341 and Asn433. 2 disulfides stabilise this stretch: Cys344-Cys461 and Cys455-Cys465. N-linked (GlcNAc...) asparagine; by host glycans are attached at residues Asn481 and Asn538. The cysteines at positions 531 and 542 are disulfide-linked.

Belongs to the paramyxoviruses hemagglutinin-neuraminidase family. Homotetramer; composed of disulfide-linked homodimers. Interacts with F protein trimer. Interacts with host CG-1B; this interaction inhibits viral adsorption and replication rather than internalization.

It localises to the virion membrane. It is found in the host cell membrane. The enzyme catalyses Hydrolysis of alpha-(2-&gt;3)-, alpha-(2-&gt;6)-, alpha-(2-&gt;8)- glycosidic linkages of terminal sialic acid residues in oligosaccharides, glycoproteins, glycolipids, colominic acid and synthetic substrates.. In terms of biological role, mediates the viral entry into the host cell together with fusion/F protein. Attaches the virus to sialic acid-containing cell receptors and thereby initiates infection. Binding of HN protein to the receptor induces a conformational change that allows the F protein to trigger virion/cell membranes fusion. Neuraminidase activity ensures the efficient spread of the virus by dissociating the mature virions from the neuraminic acid containing glycoproteins. This chain is Hemagglutinin-neuraminidase (HN), found in Gallus gallus (Chicken).